The following is an 809-amino-acid chain: Transitional endoplasmic reticulum ATPase homolog 1 (809 aa).

Residues 1 to 21 (MASVPTHQSEKEKKNDELSTA) form a disordered region. A compositionally biased stretch (basic and acidic residues) spans 8–21 (QSEKEKKNDELSTA). Residues 253-259 (PGTGKTL), Asn-354, His-390, and 527-532 (GCGKTL) each bind ATP. The disordered stretch occupies residues 779–809 (FGNNFKFPGEQRGSDAPSAPVPAQDDDDLYN). Residues 803–809 (DDDDLYN) form an interaction with ufd-2 region.

This sequence belongs to the AAA ATPase family. CDC48 subfamily. Homohexamer; oligomerization is ATP-independent. Forms a ring-shaped particle of 18.3 nm diameter, that displays 6-fold radial symmetry. Interacts with cdc-48.2 and thus may form heterohexamers. Forms a complex composed of cdc-48.1, him-6 and crp-1; within the complex, interacts with helicase him-6 and GTPase crp-1. Forms a complex composed of deubiquitinating enzyme atx-3, adapter ubxn-5 and cdc-48.1; within the complex, interacts (via N-terminus) with ubxn-5 and with atx-3. Forms a complex composed of deubiquitinating enzyme atx-3, E4 ubiquitin-protein ligase ufd-2 and cdc-48.1; within the complex, interacts with atx-3 and (via DDDLYN motif) with ufd-2. Interacts (via N-terminus) with atx-3 (via RRDR motif); the interaction is not required for atx-3 enzymatic activity. Forms a complex composed of cdc-48.1, myosin chaperone unc-45, ubiquitin-protein ligases ufd-2 and chn-1; within the complex, interacts (via DDDLYN motif) with ufd-2 and targets myosin chaperone unc-45 for proteasomal degradation. Forms a complex composed of ubxn-3, ufd-1, npl-4.1 and cdc-48.1; within the complex, interacts (via N-terminus) with ubxn-3 (via FPK motif) and with ufd-1. Forms a complex composed of ubxn-3, cdc-48.1 and/or cdc-48.2 and substrate cdt-1. Interacts (via N-terminus) with ubxn-1. Interacts (via N-terminus) with ubxn-2. Interacts (via N-terminus) with ubxn-4. Interacts with ubxn-6. Interacts with ufd-3. Does not interact with air-2. As to expression, expressed in germ cells and spermatheca. Expressed in body wall muscles.

The protein localises to the cytoplasm. It localises to the perinuclear region. It catalyses the reaction ATP + H2O = ADP + phosphate + H(+). The first ATP-binding region has low ATPase activity. The second ATP-binding region is responsible for ATPase activity. ATP binding to the first ATP-binding region induces intrinsic activity of the second ATP-binding region. While ATP binding to the first ATP-binding region appears to prevent ATP hydrolysis by the second ATP-binding region, ADP-binding to first region promotes the coordinate and cooperative ATPase cycle of the second ATP-binding region. ATP binding to the first ATP-binding region induces a conformational change, promoting the rotation of the first ATP-binding region relative to the second ATP-binding region in the hexamer. Inhibited by N-ethylmaleimide (NEM). Its function is as follows. ATP-dependent chaperone which probably uses the energy provided by ATP hydrolysis to generate mechanical force to unfold substrate proteins, disassemble protein complexes, and disaggregate protein aggregates. Can also prevent aggregation of unfolded proteins also in an ATP-independent manner. Targets polyubiquitinated proteins for proteasomal degradation by binding to 'Lys-48'-linked polyubiquitin chains. Involved in the cytoplasmic elimination of misfolded proteins exported from the ER. This pathway, known as ERAD, prevents the activation of the unfolded protein response (UPR) caused by the accumulation of misfolded proteins in the ER. In association with helicase him-6 and GTPase crp-1, regulates the unfolded protein response (UPR) following ER stress, probably independently of the ERAD pathway. Together with udf-2 and chn-1, regulates myosin assembly in body wall muscles by targeting myosin chaperone unc-45 for proteasomal degradation. Together with the ufd-1-npl-4 complex, controls the switch from spermatogenesis to oogenesis by regulating E3 ligase cul-2 complex-mediated tra-1 proteasomal degradation. During oocyte meiosis and together with cdc-48.2, required for chromosome condensation at the diakinesis phase in prophase I and for progression of metaphase I. During the first embryonic cell division, regulates DNA replication and thus chromosome segregation and decondensation, and nuclear envelope re-assembly. In S phase and in association with ufd-1, npl-4.1 and/or npl-4.2 and ubxn-3, ensures the degradation of DNA licensing factor cdt-1 after the initiation of DNA replication and thus the disassembly of the DNA replication CMG helicase complex by promoting the dissociation from chromatin of several of its components including cdc-45 and sld-5. Regulates ubxn-3 nuclear localization during S phase. During the first embryonic cell divisions and together with cdc-48.2, regulates the re-assembly of the nuclear envelope after mitosis possibly by inactivating kinase air-2, a component of the chromosomal passenger complex (CPC). However, in another study, cdc-48.1 does not appear to be implicated in the regulation of air-2. This chain is Transitional endoplasmic reticulum ATPase homolog 1, found in Caenorhabditis elegans.